The sequence spans 159 residues: 2-C-methyl-D-erythritol 2,4-cyclodiphosphate synthase (159 aa).

A divalent metal cation-binding residues include D8 and H10. Residues 8 to 10 (DVH) and 34 to 35 (HS) contribute to the 4-CDP-2-C-methyl-D-erythritol 2-phosphate site. H42 contacts a divalent metal cation. 4-CDP-2-C-methyl-D-erythritol 2-phosphate is bound by residues 56-58 (DIG), 61-65 (FPDTD), 100-106 (AQAPRML), 132-135 (TTTE), F139, and R142.

The protein belongs to the IspF family. In terms of assembly, homotrimer. The cofactor is a divalent metal cation.

It catalyses the reaction 4-CDP-2-C-methyl-D-erythritol 2-phosphate = 2-C-methyl-D-erythritol 2,4-cyclic diphosphate + CMP. The protein operates within isoprenoid biosynthesis; isopentenyl diphosphate biosynthesis via DXP pathway; isopentenyl diphosphate from 1-deoxy-D-xylulose 5-phosphate: step 4/6. In terms of biological role, involved in the biosynthesis of isopentenyl diphosphate (IPP) and dimethylallyl diphosphate (DMAPP), two major building blocks of isoprenoid compounds. Catalyzes the conversion of 4-diphosphocytidyl-2-C-methyl-D-erythritol 2-phosphate (CDP-ME2P) to 2-C-methyl-D-erythritol 2,4-cyclodiphosphate (ME-CPP) with a corresponding release of cytidine 5-monophosphate (CMP). This chain is 2-C-methyl-D-erythritol 2,4-cyclodiphosphate synthase, found in Escherichia coli O6:K15:H31 (strain 536 / UPEC).